Reading from the N-terminus, the 332-residue chain is Probable isoaspartyl peptidase/L-asparaginase CG7860 (332 aa).

The active-site Nucleophile is threonine 188. Substrate contacts are provided by residues 216–219 and 239–242; these read RIGD and TGHG.

Belongs to the Ntn-hydrolase family. As to quaternary structure, heterodimer of an alpha and beta chain produced by autocleavage. In terms of processing, cleaved into an alpha and beta chain by autocatalysis; this activates the enzyme. The N-terminal residue of the beta subunit is responsible for the nucleophile hydrolase activity.

It carries out the reaction L-asparagine + H2O = L-aspartate + NH4(+). It catalyses the reaction Cleavage of a beta-linked Asp residue from the N-terminus of a polypeptide.. Functionally, has both L-asparaginase and beta-aspartyl peptidase activity. Does not have aspartylglucosaminidase activity and is inactive toward GlcNAc-L-Asn. Likewise, has no activity toward glutamine. In Drosophila melanogaster (Fruit fly), this protein is Probable isoaspartyl peptidase/L-asparaginase CG7860.